Consider the following 438-residue polypeptide: EF-hand calcium-binding domain-containing protein 3 (438 aa).

EF-hand domains follow at residues 47 to 82 (SQMAAFQDAYNFFYKDKTGCIDFHGLMCTVAKLGMN) and 83 to 118 (LTKHDVYNELKCADIDRDGKVNFSDFIKVLTDKNLF). Asp-96, Asp-98, Asp-100, Lys-102, and Asp-107 together coordinate Ca(2+). At Tyr-279 the chain carries Phosphotyrosine. Positions 405-415 (SSHNSRSSSSS) are enriched in low complexity. Positions 405–438 (SSHNSRSSSSSDTSECYTDSGRKRKRKGLKGFQQ) are disordered. The segment covering 426 to 438 (RKRKRKGLKGFQQ) has biased composition (basic residues).

The sequence is that of EF-hand calcium-binding domain-containing protein 3 (EFCAB3) from Homo sapiens (Human).